The primary structure comprises 211 residues: DELTA-stichotoxin-Hmg2a (211 aa).

A signal peptide spans 1–19; sequence MNRLIVLFLIVTMICATIA. The propeptide occupies 20–34; the sequence is VPSREELEDQKEYKR. A plays an important role in the hemolytic activity region spans residues 37–46; the sequence is ALAGTIIEGA. Residues 45-64 form an N-terminal region region; sequence GASLGFQILDKVLGELGKVS. Phosphocholine contacts are provided by serine 88, valine 121, serine 139, proline 141, tyrosine 167, tyrosine 171, and tyrosine 172. The trp-rich region, which is important for the binding to lipid membrane stretch occupies residues 139–154; sequence SVPFDYNFYSNWWDVK. A Cell attachment site, crucial for protein stability motif is present at residues 177-179; that stretch reads RGD.

Belongs to the actinoporin family. Sea anemone subfamily. Octamer or nonamer in membranes. Monomer in the soluble state.

The protein resides in the secreted. It localises to the nematocyst. Its subcellular location is the target cell membrane. Functionally, pore-forming protein that forms cations-selective hydrophilic pores of around 1 nm and causes cardiac stimulation and cytolysis. Pore formation is a multi-step process that involves specific recognition of membrane sphingomyelin (but neither cholesterol nor phosphatidylcholine) using aromatic rich region and adjacent phosphocholine (POC) binding site, firm binding to the membrane (mainly driven by hydrophobic interactions) accompanied by the transfer of the N-terminal region to the lipid-water interface and finally pore formation after oligomerization of monomers. The protein is DELTA-stichotoxin-Hmg2a of Heteractis magnifica (Magnificent sea anemone).